The chain runs to 699 residues: MNLLPKSSKEFGSVDYWEKFFQQRGKKAFEWYGTYLELCGVLHKYIKPREKVLVVGCGNSELSEQLYDVGYQDIVNIDISEVVIKQMKERNASRRPRMSFLKMDMTQMEFPDASFQVVLDKGTLDAVLTDEEEKTLQQVDRMLAEVGRVLQVGGRYLCISLAQAHVLKKAVGHFSREGWMVRVHQVASSQDQLLEAEPRFSLPVFAFIMTKFRPVTGSALQIFELCAQEQGKPVRLESAEQLAEAVRERQQYAWLCSQLYRKAGLGSVSLDLCNGDTGEPRYTLHVVDSPTVKPSRDNHFAIFIIPQGRETEWLFGMEEGRKQLAASAGFRRLITVALHRGQQYEGMDSIQAELSARVMELAPAGMPAQLQVPFLSVGGDIGVRIVQHQACSPLSGDYVIEDVQGDDKRYFRRLIFLSNRNVVQSEARLLQDVSHRAQKKRKKDRKKHRPADTPEDLPAAQGQSIDKSYLCCEHHKAMIAGLALLKNPELLLETPLALLVVGLGGGSLPLFIHDHFPKSCIHAVEIDPSMLEVATQWFGFSQSDRMKVHIADGLDFITRLAEEEARPHYDVIMFDVDSKDPTLGMSCPPPAFVAQLFLQKVKSILTPEGVFILNLVCRDLGLKDSVLAGLKAVFPLLYVRRIEGEVNEILFCQLHSECKLATPELLEMARALEQTLRKPGKGWDDTYVLSDMLNTVKIV.

At M1 the chain carries N-acetylmethionine. S267 carries the post-translational modification Phosphoserine. The interval 433–460 (VSHRAQKKRKKDRKKHRPADTPEDLPAA) is disordered. The segment covering 436 to 449 (RAQKKRKKDRKKHR) has biased composition (basic residues).

The protein belongs to the methyltransferase superfamily. Forms a tripartite complex containing GAB1, METTL13 and SPRY2. Within the complex interacts with GAB1 and SPRY2.

The protein resides in the cytoplasm. Its subcellular location is the nucleus. It localises to the mitochondrion. The enzyme catalyses L-lysyl-[protein] + S-adenosyl-L-methionine = N(6)-methyl-L-lysyl-[protein] + S-adenosyl-L-homocysteine + H(+). It carries out the reaction N(6)-methyl-L-lysyl-[protein] + S-adenosyl-L-methionine = N(6),N(6)-dimethyl-L-lysyl-[protein] + S-adenosyl-L-homocysteine + H(+). The catalysed reaction is N-terminal glycyl-L-lysyl-L-glutamyl-[protein] + 3 S-adenosyl-L-methionine = N-terminal N,N,N-trimethyl-glycyl-L-lysyl-L-glutamyl-[protein] + 3 S-adenosyl-L-homocysteine + 3 H(+). In terms of biological role, dual methyltransferase that catalyzes methylation of elongation factor 1-alpha (EEF1A1 and EEF1A2) at two different positions, and is therefore involved in the regulation of mRNA translation. Via its C-terminus, methylates EEF1A1 and EEF1A2 at the N-terminal residue 'Gly-2'. Via its N-terminus dimethylates EEF1A1 and EEF1A2 at residue 'Lys-55'. Has no activity towards core histones H2A, H2B, H3 and H4. The chain is eEF1A lysine and N-terminal methyltransferase (METTL13) from Bos taurus (Bovine).